We begin with the raw amino-acid sequence, 327 residues long: Phenylalanine--tRNA ligase alpha subunit (327 aa).

Glu252 contributes to the Mg(2+) binding site.

The protein belongs to the class-II aminoacyl-tRNA synthetase family. Phe-tRNA synthetase alpha subunit type 1 subfamily. Tetramer of two alpha and two beta subunits. The cofactor is Mg(2+).

It is found in the cytoplasm. It carries out the reaction tRNA(Phe) + L-phenylalanine + ATP = L-phenylalanyl-tRNA(Phe) + AMP + diphosphate + H(+). The polypeptide is Phenylalanine--tRNA ligase alpha subunit (Yersinia enterocolitica serotype O:8 / biotype 1B (strain NCTC 13174 / 8081)).